The chain runs to 254 residues: 5-oxoprolinase subunit A (254 aa).

It belongs to the LamB/PxpA family. In terms of assembly, forms a complex composed of PxpA, PxpB and PxpC.

It catalyses the reaction 5-oxo-L-proline + ATP + 2 H2O = L-glutamate + ADP + phosphate + H(+). Functionally, catalyzes the cleavage of 5-oxoproline to form L-glutamate coupled to the hydrolysis of ATP to ADP and inorganic phosphate. The chain is 5-oxoprolinase subunit A from Burkholderia thailandensis (strain ATCC 700388 / DSM 13276 / CCUG 48851 / CIP 106301 / E264).